Reading from the N-terminus, the 24-residue chain is RHHRKRIGHTVKQLAKLVKHIHEY.

As to expression, expressed by the skin glands.

The protein localises to the secreted. The chain is Skin secreted peptide 1 from Ascaphus truei (Coastal tailed frog).